The chain runs to 248 residues: Octanoyltransferase (248 aa).

The region spanning 53–238 (ADTGDEIWVV…NLDGASAAAD (186 aa)) is the BPL/LPL catalytic domain. Residues 93-100 (RGGQITYH), 165-167 (ALG), and 178-180 (GLS) contribute to the substrate site. Cys-196 serves as the catalytic Acyl-thioester intermediate.

The protein belongs to the LipB family.

The protein localises to the cytoplasm. The catalysed reaction is octanoyl-[ACP] + L-lysyl-[protein] = N(6)-octanoyl-L-lysyl-[protein] + holo-[ACP] + H(+). It participates in protein modification; protein lipoylation via endogenous pathway; protein N(6)-(lipoyl)lysine from octanoyl-[acyl-carrier-protein]: step 1/2. In terms of biological role, catalyzes the transfer of endogenously produced octanoic acid from octanoyl-acyl-carrier-protein onto the lipoyl domains of lipoate-dependent enzymes. Lipoyl-ACP can also act as a substrate although octanoyl-ACP is likely to be the physiological substrate. The sequence is that of Octanoyltransferase from Burkholderia orbicola (strain MC0-3).